A 278-amino-acid chain; its full sequence is Probable ribosomal RNA small subunit methyltransferase A (278 aa).

Histidine 25, methionine 27, glycine 52, glutamate 73, aspartate 98, and asparagine 114 together coordinate S-adenosyl-L-methionine.

This sequence belongs to the class I-like SAM-binding methyltransferase superfamily. rRNA adenine N(6)-methyltransferase family. RsmA subfamily.

The protein localises to the cytoplasm. Specifically dimethylates two adjacent adenosines in the loop of a conserved hairpin near the 3'-end of 16S rRNA in the 30S particle. May play a critical role in biogenesis of 30S subunits. The polypeptide is Probable ribosomal RNA small subunit methyltransferase A (Methanopyrus kandleri (strain AV19 / DSM 6324 / JCM 9639 / NBRC 100938)).